We begin with the raw amino-acid sequence, 134 residues long: Small ribosomal subunit protein uS11 (134 aa).

Belongs to the universal ribosomal protein uS11 family. Part of the 30S ribosomal subunit. Interacts with proteins S7 and S18. Binds to IF-3.

Located on the platform of the 30S subunit, it bridges several disparate RNA helices of the 16S rRNA. Forms part of the Shine-Dalgarno cleft in the 70S ribosome. This Paracidovorax citrulli (strain AAC00-1) (Acidovorax citrulli) protein is Small ribosomal subunit protein uS11.